The chain runs to 608 residues: Prolactin receptor (608 aa).

The first 19 residues, 1-19 (MSSALAYMLLVLSISLLNG), serve as a signal peptide directing secretion. At 20 to 229 (QSPPGKPEIH…EIPNDFTLKD (210 aa)) the chain is on the extracellular side. Fibronectin type-III domains follow at residues 22–122 (PPGK…IVEP) and 124–224 (PPRN…IPND). An intrachain disulfide couples C31 to C41. A glycan (N-linked (GlcNAc...) asparagine) is linked at N54. C70 and C81 are oxidised to a cystine. N-linked (GlcNAc...) asparagine glycans are attached at residues N99 and N127. Zn(2+) contacts are provided by D206 and H207. A WSXWS motif motif is present at residues 210-214 (WSRWG). Residues 230 to 253 (TTVWIIVAVLSAVICLIMVWAVAL) form a helical membrane-spanning segment. At 254–608 (KGYSMMTCIF…DPTCFMHSFH (355 aa)) the chain is on the cytoplasmic side. The short motif at 262-270 (IFPPVPGPK) is the Box 1 motif element. Disordered stretches follow at residues 317–355 (DERL…HSLL), 377–419 (KPEN…TRRS), and 466–487 (GAKS…EKGP). Residues 318-327 (ERLMPSHSKE) show a composition bias toward basic and acidic residues. Over residues 345-354 (GHGSYDSHSL) the composition is skewed to low complexity. Positions 398 to 408 (CHTDTSKSTTW) are enriched in polar residues.

This sequence belongs to the type I cytokine receptor family. Type 1 subfamily. As to quaternary structure, interacts with SMARCA1. Interacts with NEK3 and VAV2 and this interaction is prolactin-dependent.

The protein resides in the membrane. Its function is as follows. This is a receptor for the anterior pituitary hormone prolactin. The polypeptide is Prolactin receptor (Prlr) (Mus musculus (Mouse)).